The chain runs to 482 residues: Histone deacetylase 1 (482 aa).

The tract at residues 9 to 321 (RKVCYYYDGD…WTYETAVALD (313 aa)) is histone deacetylase. 1D-myo-inositol 1,4,5,6-tetrakisphosphate-binding residues include G27 and K31. K74 is modified (N6-acetyllysine; alternate). K74 participates in a covalent cross-link: Glycyl lysine isopeptide (Lys-Gly) (interchain with G-Cter in SUMO2); alternate. The active site involves H141. Zn(2+) contacts are provided by D176 and H178. K220 carries the post-translational modification N6-acetyllysine. The residue at position 261 (C261) is an S-nitrosocysteine. D264 provides a ligand contact to Zn(2+). 1D-myo-inositol 1,4,5,6-tetrakisphosphate is bound at residue R270. Position 273 is an S-nitrosocysteine (C273). The segment covering 390–400 (PEESGDEDEED) has biased composition (acidic residues). A disordered region spans residues 390-482 (PEESGDEDEE…KGVKEEVKMA (93 aa)). Residues S393, S406, S409, S421, and S423 each carry the phosphoserine modification. The span at 401-416 (PDKRISICSSDKRIAC) shows a compositional bias: basic and acidic residues. The segment covering 417-427 (EEEFSDSDEEG) has biased composition (acidic residues). Position 432 is an N6-methylated lysine; by EHMT2 (K432). A Glycyl lysine isopeptide (Lys-Gly) (interchain with G-Cter in SUMO2) cross-link involves residue K438. Over residues 443-482 (VKTEDEKEKDPEEKKEVTEEEKTKEEKPEAKGVKEEVKMA) the composition is skewed to basic and acidic residues. A Glycyl lysine isopeptide (Lys-Gly) (interchain with G-Cter in SUMO2); alternate cross-link involves residue K444. K444 is covalently cross-linked (Glycyl lysine isopeptide (Lys-Gly) (interchain with G-Cter in SUMO); alternate). Residues K456, K457, and K473 each participate in a glycyl lysine isopeptide (Lys-Gly) (interchain with G-Cter in SUMO2) cross-link. K476 participates in a covalent cross-link: Glycyl lysine isopeptide (Lys-Gly) (interchain with G-Cter in SUMO2); alternate. K476 is covalently cross-linked (Glycyl lysine isopeptide (Lys-Gly) (interchain with G-Cter in SUMO); alternate). K480 is covalently cross-linked (Glycyl lysine isopeptide (Lys-Gly) (interchain with G-Cter in SUMO2)).

It belongs to the histone deacetylase family. HD type 1 subfamily. As to quaternary structure, part of the core histone deacetylase (HDAC) complex composed of HDAC1, HDAC2, RBBP4 and RBBP7, the core complex associates with SIN3, SAP18 and SAP30 to form the SIN3 HDAC complex. Component of the nucleosome remodeling and deacetylase (NuRD) repressor complex, composed of core proteins MTA1, MTA2, MTA3, RBBP4, RBBP7, HDAC1, HDAC2, MBD2, MBD3, and peripherally associated proteins CDK2AP1, CDK2AP2, GATAD2A, GATAD2B, CHD3, CHD4 and CHD5. The exact stoichiometry of the NuRD complex is unknown, and some subunits such as MBD2 and MBD3, GATAD2A and GATAD2B, and CHD3, CHD4 and CHD5 define mutually exclusive NuRD complexes. Component of a BHC histone deacetylase complex that contains HDAC1, HDAC2, HMG20B/BRAF35, KDM1A, RCOR1/CoREST and PHF21A/BHC80. The BHC complex may also contain ZMYM2, ZNF217, ZMYM3, GSE1 and GTF2I. Component of a mSin3A corepressor complex that contains SIN3A, SAP130, SUDS3/SAP45, ARID4B/SAP180, HDAC1 and HDAC2. Found in a trimeric complex with APBB1 and TSHZ3; the interaction between HDAC1 and APBB1 is mediated by TSHZ3. Forms a complex comprising APPL1, RUVBL2, APPL2, CTNNB1 and HDAC2. Component of a RCOR/GFI/KDM1A/HDAC complex. Part of a complex composed of TRIM28, HDAC1, HDAC2 and EHMT2. Part of a complex containing at least CDYL, MIER1, MIER2, HDAC1 and HDAC2. The large PER complex involved in the histone deacetylation is composed of at least HDAC1, PER2, SFPQ and SIN3A. Associates with the 9-1-1 complex; interacts with HUS1. Found in a complex with DNMT3A and HDAC7. Found in a complex with YY1, SIN3A and GON4L. Identified in a histone deacetylase complex that contains DNTTIP1, HDAC1 and MIDEAS; this complex assembles into a tetramer that contains four copies of each protein chain. Found in a complex composed of at least SINHCAF, SIN3A, HDAC1, SAP30, RBBP4, OGT and TET1. Component of the SIN3B complex, which includes SIN3B, HDAC1, PHF12 and MORF4L1. Interacts with GFI1; the interaction is direct. Interacts directly with GFI1B. Interacts with TSHZ3 (via N-terminus); the interaction is direct. Interacts with APEX1; the interaction is not dependent on the acetylated status of APEX1. Interacts with BANP. Interacts with BAZ2A/TIP5. Interacts with BCL6. Interacts with BCOR. Interacts with BHLHE40/DEC1. Interacts with BRCC3; this interaction is enhanced in the presence of PWWP2B. Interacts with BRMS1. Interacts with BRMS1L. Interacts with C10orf90/FATS (via its N-terminal); the interaction prevents binding of HDAC1 to CDKN1A/p21 and facilitates the acetylation and stabilization of CDKN1A/p21. Interacts with CBFA2T3. Interacts with CCAR2. Interacts with CDK2AP1. Interacts with CHD3. Interacts with CHD4. Interacts with CHFR. Interacts with CIART. Interacts with CDKN1A/p21. Interacts with CDK5 complexed to CDK5R1 (p25). Interacts with CRY1. Interacts with DAXX. Interacts with DDIT3/CHOP. Interacts with DDX5. Interacts with DHX36; this interaction occurs in a RNA-dependent manner. Interacts with DNMT1. Interacts with DNTTIP1. Interacts with E4F1. Interacts with EP300. Interacts with ERCC6. Interacts with GATAD2A. Interacts with HCFC1. Interacts with HDAC9. Interacts with HUS1. Interacts with INSM1. Interacts with KDM4A. Interacts with KDM5A; this interaction impairs histone deacetylation. Interacts with KDM5B. Interacts with KLF1. Interacts with MBD3L2. Interacts with MIER1. Interacts with NFE4. Interacts with NR4A2/NURR1. Interacts with NR1D2 (via C-terminus). Interacts with NRIP1. Interacts with NSD2. Interacts with PACS2. Interacts with PHB2. Interacts with PPHLN1. Interacts with PRDM6. Interacts with PRDM16. Interacts with PWWP2A in a MTA1-dependent manner. Interacts with PWWP2B. Interacts with RB1. Interacts with RERE. Interacts with SANBR (via the BTB domain). Interacts with SAMSN1. Interacts with SAP30L. Interacts with SETDB1. Interacts with SIN3A. Interacts with SMAD3. Interacts with SMAD4; positively regulated by ZBTB7A. Interacts with SMARCAD1. Interacts with SMARCA4/BRG1. Interacts with SMYD2. Interacts with SMYD4 (via MYND-type zinc finger). Interacts with SP1; the interaction deacetylates SP1 and regulates its transcriptional activity. Interacts with SP3; the interaction deacetylates SP3 and regulates its transcriptional activity. In vitro, C(18) ceramides increase this interaction and the subsequent SP3 deacetylation and SP3-mediated repression of the TERT promoter. Interacts with SPEN/MINT. Interacts with SPHK2. Interacts with SUV39H1. Interacts with TGIF. Interacts with TGIF2. Interacts with TRAF6. Interacts with TRIM28; the interaction recruits HDAC1 to E2F1 and inhibits its acetylation. Interacts with TSC22D3 isoform 1; this interaction affects HDAC1 activity on MYOG promoter and thus inhibits MYOD1 transcriptional activity. Interacts with UHRF1. Interacts with UHRF2. Interacts with ZBTB7A. Interacts with ZMYND8. Interacts with ZMYND15. Interacts with ZNF431. Interacts with ZNF516; this interaction is enhanced in the presence of PWWP2B. Interacts with ZNF541. Interacts with ZNF638. Interacts with ZNHIT1. Interacts with the non-histone region of MACROH2A1. Identified in a complex with HDAC2, KCTD19, DNTTIP1 and ZNF541. Interacts with MSX3. Interacts with VRK1. Requires Zn(2+) as cofactor. Sumoylated on Lys-444 and Lys-476; which promotes enzymatic activity. Desumoylated by SENP1. Post-translationally, phosphorylation on Ser-421 and Ser-423 promotes enzymatic activity and interactions with NuRD and SIN3 complexes. Phosphorylated by CDK5. In terms of processing, ubiquitinated by CHFR and KCTD11, leading to its degradation by the proteasome.

Its subcellular location is the nucleus. The enzyme catalyses N(6)-acetyl-L-lysyl-[histone] + H2O = L-lysyl-[histone] + acetate. The catalysed reaction is N(6)-acetyl-L-lysyl-[protein] + H2O = L-lysyl-[protein] + acetate. It carries out the reaction N(6)-(2E)-butenoyl-L-lysyl-[protein] + H2O = (2E)-2-butenoate + L-lysyl-[protein]. It catalyses the reaction N(6)-[(S)-lactoyl]-L-lysyl-[protein] + H2O = (S)-lactate + L-lysyl-[protein]. Inositol tetraphosphate (1D-myo-inositol 1,4,5,6-tetrakisphosphate) may act as an intermolecular glue between HDAC1 and N-Cor repressor complex components. Its function is as follows. Histone deacetylase that catalyzes the deacetylation of lysine residues on the N-terminal part of the core histones (H2A, H2B, H3 and H4). Histone deacetylation gives a tag for epigenetic repression and plays an important role in transcriptional regulation, cell cycle progression and developmental events. Histone deacetylases act via the formation of large multiprotein complexes. Acts as a component of the histone deacetylase NuRD complex which participates in the remodeling of chromatin. As part of the SIN3B complex is recruited downstream of the constitutively active genes transcriptional start sites through interaction with histones and mitigates histone acetylation and RNA polymerase II progression within transcribed regions contributing to the regulation of transcription. Also functions as a deacetylase for non-histone targets, such as NR1D2, RELA, SP1, SP3, STAT3 and TSHZ3. Deacetylates SP proteins, SP1 and SP3, and regulates their function. Component of the BRG1-RB1-HDAC1 complex, which negatively regulates the CREST-mediated transcription in resting neurons. Upon calcium stimulation, HDAC1 is released from the complex and CREBBP is recruited, which facilitates transcriptional activation. Deacetylates TSHZ3 and regulates its transcriptional repressor activity. Deacetylates 'Lys-310' in RELA and thereby inhibits the transcriptional activity of NF-kappa-B. Deacetylates NR1D2 and abrogates the effect of KAT5-mediated relieving of NR1D2 transcription repression activity. Component of a RCOR/GFI/KDM1A/HDAC complex that suppresses, via histone deacetylase (HDAC) recruitment, a number of genes implicated in multilineage blood cell development. Involved in CIART-mediated transcriptional repression of the circadian transcriptional activator: CLOCK-BMAL1 heterodimer. Required for the transcriptional repression of circadian target genes, such as PER1, mediated by the large PER complex or CRY1 through histone deacetylation. In addition to protein deacetylase activity, also has protein-lysine deacylase activity: acts as a protein decrotonylase and delactylase by mediating decrotonylation ((2E)-butenoyl) and delactylation (lactoyl) of histones, respectively. The protein is Histone deacetylase 1 (Hdac1) of Rattus norvegicus (Rat).